A 98-amino-acid polypeptide reads, in one-letter code: (4S)-4-hydroxy-5-phosphonooxypentane-2,3-dione isomerase (98 aa).

Positions Asn-2–Phe-91 constitute an ABM domain.

Belongs to the LsrG family. In terms of assembly, homodimer.

It localises to the cytoplasm. The enzyme catalyses (2S)-2-hydroxy-3,4-dioxopentyl phosphate = 3-hydroxy-2,4-dioxopentyl phosphate. Functionally, involved in the degradation of phospho-AI-2, thereby terminating induction of the lsr operon and closing the AI-2 signaling cycle. Catalyzes the conversion of (4S)-4-hydroxy-5-phosphonooxypentane-2,3-dione (P-DPD) to 3-hydroxy-5-phosphonooxypentane-2,4-dione (P-HPD). The polypeptide is (4S)-4-hydroxy-5-phosphonooxypentane-2,3-dione isomerase (Klebsiella pneumoniae subsp. pneumoniae (strain ATCC 700721 / MGH 78578)).